Here is a 290-residue protein sequence, read N- to C-terminus: Ribosomal RNA small subunit methyltransferase A (290 aa).

S-adenosyl-L-methionine-binding residues include asparagine 27, leucine 29, glycine 54, glutamate 75, aspartate 100, and asparagine 125.

It belongs to the class I-like SAM-binding methyltransferase superfamily. rRNA adenine N(6)-methyltransferase family. RsmA subfamily.

Its subcellular location is the cytoplasm. The enzyme catalyses adenosine(1518)/adenosine(1519) in 16S rRNA + 4 S-adenosyl-L-methionine = N(6)-dimethyladenosine(1518)/N(6)-dimethyladenosine(1519) in 16S rRNA + 4 S-adenosyl-L-homocysteine + 4 H(+). Functionally, specifically dimethylates two adjacent adenosines (A1518 and A1519) in the loop of a conserved hairpin near the 3'-end of 16S rRNA in the 30S particle. May play a critical role in biogenesis of 30S subunits. The protein is Ribosomal RNA small subunit methyltransferase A of Streptococcus pyogenes serotype M5 (strain Manfredo).